A 474-amino-acid polypeptide reads, in one-letter code: Bifunctional protein HldE (474 aa).

A ribokinase region spans residues 1–318 (MKLSMPRFDQ…RAVQREQGSE (318 aa)). 194 to 197 (NLSE) is a binding site for ATP. D263 is an active-site residue. Residues 343-474 (FTNGCFDILH…AIVEKIRQKG (132 aa)) are cytidylyltransferase.

It in the N-terminal section; belongs to the carbohydrate kinase PfkB family. In the C-terminal section; belongs to the cytidylyltransferase family. As to quaternary structure, homodimer.

The catalysed reaction is D-glycero-beta-D-manno-heptose 7-phosphate + ATP = D-glycero-beta-D-manno-heptose 1,7-bisphosphate + ADP + H(+). It carries out the reaction D-glycero-beta-D-manno-heptose 1-phosphate + ATP + H(+) = ADP-D-glycero-beta-D-manno-heptose + diphosphate. The protein operates within nucleotide-sugar biosynthesis; ADP-L-glycero-beta-D-manno-heptose biosynthesis; ADP-L-glycero-beta-D-manno-heptose from D-glycero-beta-D-manno-heptose 7-phosphate: step 1/4. It functions in the pathway nucleotide-sugar biosynthesis; ADP-L-glycero-beta-D-manno-heptose biosynthesis; ADP-L-glycero-beta-D-manno-heptose from D-glycero-beta-D-manno-heptose 7-phosphate: step 3/4. Functionally, catalyzes the phosphorylation of D-glycero-D-manno-heptose 7-phosphate at the C-1 position to selectively form D-glycero-beta-D-manno-heptose-1,7-bisphosphate. Its function is as follows. Catalyzes the ADP transfer from ATP to D-glycero-beta-D-manno-heptose 1-phosphate, yielding ADP-D-glycero-beta-D-manno-heptose. This chain is Bifunctional protein HldE, found in Pseudomonas paraeruginosa (strain DSM 24068 / PA7) (Pseudomonas aeruginosa (strain PA7)).